The sequence spans 110 residues: Mobility group protein 1B (110 aa).

A DNA-binding region (HMG box) is located at residues 5 to 71; that stretch reads PKRPLSAYML…NYIRALQEYE (67 aa). A compositionally biased stretch (basic and acidic residues) spans 71 to 81; sequence ERNGGGGDDKG. Residues 71 to 110 are disordered; the sequence is ERNGGGGDDKGKKRKGAAPKKGAGKKSKKGAHSDDDGDSE. Positions 82–100 are enriched in basic residues; that stretch reads KKRKGAAPKKGAGKKSKKG.

It belongs to the HMGB family.

It localises to the nucleus. Its subcellular location is the chromosome. Its function is as follows. Found in condensed chromomeres. Binds preferentially to AT-rich DNA. The protein is Mobility group protein 1B (HMG1B) of Chironomus tentans (Midge).